A 490-amino-acid chain; its full sequence is Serine/threonine-protein kinase BSK6 (490 aa).

Glycine 2 carries the N-myristoyl glycine lipid modification. Serine 25 is subject to Phosphoserine. The 255-residue stretch at 56-310 folds into the Protein kinase domain; that stretch reads DNIVSEHGEK…KSLVTSLVTL (255 aa). ATP contacts are provided by residues 62–70 and lysine 84; that span reads HGEKAPNVV. The Proton acceptor role is filled by aspartate 178. Serine 373 is subject to Phosphoserine.

This sequence belongs to the protein kinase superfamily. Ser/Thr protein kinase family. In terms of assembly, interacts with BRI1, ASK7/BIN2, ASK9/BIL2, BSK1, BSK5, BSK8 and BSK11. Post-translationally, phosphorylated by BRI1, ASK7/BIN2 and ASK9/BIL2.

The protein localises to the cell membrane. It carries out the reaction L-seryl-[protein] + ATP = O-phospho-L-seryl-[protein] + ADP + H(+). The catalysed reaction is L-threonyl-[protein] + ATP = O-phospho-L-threonyl-[protein] + ADP + H(+). Its function is as follows. Probable serine/threonine kinase that acts as a positive regulator of brassinosteroid (BR) signaling downstream of the receptor kinase BRI1. Functions redundantly with BSK3, BSK4, BSK7 and BSK8. This Arabidopsis thaliana (Mouse-ear cress) protein is Serine/threonine-protein kinase BSK6.